A 258-amino-acid polypeptide reads, in one-letter code: Steroid 5-alpha-reductase DET2 (258 aa).

Helical transmembrane passes span 8-28, 49-69, 77-97, 109-129, 144-164, and 201-221; these read FHYC…SLYF, LAWF…FPSG, SFLL…LYPL, FPVS…YLQA, LFWW…WVNV, and IMEW…GFFL.

The protein belongs to the steroid 5-alpha reductase family. Accumulates in fibers (seed trichomes) during both their initiation and elongation phases. Also present in roots, hypocotyls, leaves, flowers and ovules, and barely in cotyledons.

The protein resides in the membrane. It catalyses the reaction a 3-oxo-5alpha-steroid + NADP(+) = a 3-oxo-Delta(4)-steroid + NADPH + H(+). The protein operates within plant hormone biosynthesis; brassinosteroid biosynthesis. In terms of biological role, involved in a reduction step in the biosynthesis of the plant steroid, brassinolide (BL). Promotes cotton fibers (seed trichomes) initiation and elongation. The chain is Steroid 5-alpha-reductase DET2 from Gossypium hirsutum (Upland cotton).